The chain runs to 203 residues: Bone marrow stromal antigen 2 (203 aa).

Over 1–26 (MAPTFYHYHPLPMDQKEPGCGIRWRC) the chain is Cytoplasmic. The helical; Signal-anchor for type II membrane protein transmembrane segment at 27–47 (LAAASVLILVALVIPLIIFAV) threads the bilayer. At 48 to 183 (KANSEACRDG…EASITSKQNS (136 aa)) the chain is on the extracellular side. Residues Asn66 and Asn93 are each glycosylated (N-linked (GlcNAc...) asparagine). Residues 66–178 (NTTRLLQRQL…LRTAEEASIT (113 aa)) are a coiled coil. Ser183 carries the GPI-anchor amidated serine lipid modification. The propeptide at 184–203 (AGSMAVSSLLVLAVPLFLLF) is removed in mature form.

In terms of assembly, parallel homodimer; disulfide-linked. May form homotetramers under reducing conditions. Isoform 1 and isoform 2 form homodimers and also heterodimers with each other. Dimerization is essential for its antiviral activity. Interacts (via cytoplasmic domain) with ARHGAP44. Interacts with MMP14 (via C-terminal cytoplasmic tail). Interacts with LILRA4/ILT7. Interacts with RNF115. Post-translationally, the GPI anchor is essential for its antiviral activity.

Its subcellular location is the golgi apparatus. The protein localises to the trans-Golgi network. The protein resides in the cell membrane. It localises to the late endosome. It is found in the membrane raft. Its subcellular location is the cytoplasm. The protein localises to the apical cell membrane. IFN-induced antiviral host restriction factor which efficiently blocks the release of diverse mammalian enveloped viruses by directly tethering nascent virions to the membranes of infected cells. Acts as a direct physical tether, holding virions to the cell membrane and linking virions to each other. The tethered virions can be internalized by endocytosis and subsequently degraded or they can remain on the cell surface. In either case, their spread as cell-free virions is restricted. Its target viruses belong to diverse families, including retroviridae: human immunodeficiency virus type 1 (HIV-1), mouse mammary tumor virus (MMTV) and murine leukemia virus (MLV), filoviridae: ebola virus (EBOV), arenaviridae: lassa virus (LASV), and rhabdoviridae: vesicular stomatitis virus (VSV). Can inhibit cell surface proteolytic activity of MMP14 causing decreased activation of MMP15 which results in inhibition of cell growth and migration. Can stimulate signaling by LILRA4/ILT7 and consequently provide negative feedback to the production of IFN by plasmacytoid dendritic cells in response to viral infection. Plays a role in the organization of the subapical actin cytoskeleton in polarized epithelial cells. The chain is Bone marrow stromal antigen 2 (Bst2) from Cricetulus griseus (Chinese hamster).